The primary structure comprises 489 residues: Para-nitrobenzyl esterase (489 aa).

The active-site Acyl-ester intermediate is Ser-189. Ser-189 carries the post-translational modification Phosphoserine. Residues Glu-310 and His-399 each act as charge relay system in the active site.

It belongs to the type-B carboxylesterase/lipase family. Monomer.

Catalyzes hydrolysis of several beta-lactam antibiotic PNB esters to the corresponding free acid and PNB alcohol. This is Para-nitrobenzyl esterase (pnbA) from Bacillus subtilis (strain 168).